We begin with the raw amino-acid sequence, 702 residues long: Putative GMC-type oxidoreductase R135 (702 aa).

A helical transmembrane segment spans residues 55–75 (LTGDIVIIGAGAAGSLLAHYL). 58-88 (DIVIIGAGAAGSLLAHYLARFSNMKIILLEA) lines the FAD pocket. Residue His-628 is part of the active site.

This sequence belongs to the GMC oxidoreductase family. FAD serves as cofactor.

It is found in the virion. The protein localises to the host membrane. The sequence is that of Putative GMC-type oxidoreductase R135 from Acanthamoeba polyphaga (Amoeba).